The primary structure comprises 616 residues: MALLQISEPGLSAAPHQRRLAAGIDLGTTNSLVATVRSGQAETLPDHEGRHLLPSVVHYQQQGHTVGYAARDNAAQDTANTISSVKRMMGRSLADIQARYPHLPYRFKASVNGLPMIDTAAGLLNPVRVSADILKALAARASESLSGELDGVVITVPAYFDDAQRQGTKDAARLAGLHVLRLLNEPTAAAIAYGLDSGKEGVIAVYDLGGGTFDISILRLSRGVFEVLATGGDSALGGDDFDHLLADYIREQAGIADRSDNRVQRELLDAAIAAKIALSDADTVRVNVAGWQGEITREQFNDLISALVKRTLLACRRALKDAGVDPQDVLEVVMVGGSTRVPLVRERVGEFFGRTPLTAIDPDKVVAIGAAIQADILVGNKPDSEMLLLDVIPLSLGLETMGGLVEKVIPRNTTIPVARAQDFTTFKDGQTAMSIHVMQGERELVQDCRSLARFALRGIPPLPAGGAHIRVTFQVDADGLLSVTAMEKSTGVEASIQVKPSYGLTDSEIASMIKDSMSFAEQDVKARMLAEQKVEAARVLESLTGALTADAALLSAAERQCIDDAAAHLSAVAQGDDVDAIEQAIKNVDKQTQEFAARRMDQSVRRALKGHSVDEV.

Belongs to the heat shock protein 70 family.

In terms of biological role, chaperone involved in the maturation of iron-sulfur cluster-containing proteins. Has a low intrinsic ATPase activity which is markedly stimulated by HscB. Involved in the maturation of IscU. The protein is Chaperone protein HscA of Salmonella heidelberg (strain SL476).